Here is a 388-residue protein sequence, read N- to C-terminus: L-arabinitol 4-dehydrogenase (388 aa).

Cys55, His80, Glu81, Cys110, Cys113, Cys116, Cys124, and Glu165 together coordinate Zn(2+). NAD(+) contacts are provided by residues 192-193 (PI), Asp213, Arg218, Ile293, and 317-319 (QYR).

It belongs to the zinc-containing alcohol dehydrogenase family. Homotetramer. Requires Zn(2+) as cofactor.

It catalyses the reaction L-arabinitol + NAD(+) = L-xylulose + NADH + H(+). It participates in carbohydrate degradation; L-arabinose degradation via L-arabinitol; D-xylulose 5-phosphate from L-arabinose (fungal route): step 2/5. Functionally, catalyzes the NAD-dependent oxidation of L-arabinitol to L-xylulose in the fungal L-arabinose catabolic pathway. L-arabinose catabolism is important for using plant material as a carbon source. NADP cannot act as a cosubstrate. This chain is L-arabinitol 4-dehydrogenase (lad), found in Talaromyces emersonii (Thermophilic fungus).